The chain runs to 242 residues: MKITNLGTSGYASFYVACELYKQMSQQNHSKLGLATGGTMVDVYRFLVQLLRKNKLDVSEIETFNLDEYVGLDAQHEQSYHSYMNEMLFKQYPYFNPSLLHIPNGDADNLNDETKRYEQLINQKGPVDIQILGIGENGHIGFNEPGTDINSATHIVDLTESTISANSRYFDNEVDVPKQAVSMGLSTILKAHRIILLAFGEKKRAAIEKLAENEVNSDVPATILHAHPNVEIYVDDEAAPRL.

Asp67 acts as the Proton acceptor; for enolization step in catalysis. Asn137 (for ring-opening step) is an active-site residue. His139 serves as the catalytic Proton acceptor; for ring-opening step. Residue Glu144 is the For ring-opening step of the active site.

This sequence belongs to the glucosamine/galactosamine-6-phosphate isomerase family. NagB subfamily.

The catalysed reaction is alpha-D-glucosamine 6-phosphate + H2O = beta-D-fructose 6-phosphate + NH4(+). It functions in the pathway amino-sugar metabolism; N-acetylneuraminate degradation; D-fructose 6-phosphate from N-acetylneuraminate: step 5/5. In terms of biological role, catalyzes the reversible isomerization-deamination of glucosamine 6-phosphate (GlcN6P) to form fructose 6-phosphate (Fru6P) and ammonium ion. This is Glucosamine-6-phosphate deaminase from Staphylococcus saprophyticus subsp. saprophyticus (strain ATCC 15305 / DSM 20229 / NCIMB 8711 / NCTC 7292 / S-41).